Here is a 169-residue protein sequence, read N- to C-terminus: MLAAAPLAANAADGTITFNGKVTDKTCTISTPGGKDFAVNLPTVSKNTLATAGAVAGRTPFAINLTKCSAGNVATYFEPGSTVDFNTGRLLNQASANAATNVQLQLLGSNNQVLPIKAAGAGLAQTNSQWVTVGTDGSADLNYYAEYYATAAATPGDVTSSVKYTIIYN.

The N-terminal stretch at 1-11 is a signal peptide; it reads MLAAAPLAANA.

It belongs to the fimbrial protein family.

The protein localises to the fimbrium. In terms of biological role, involved in adherence to eukaryotic epithelial cells and abiotic surfaces. Mediates agglutination of animal red blood cells. In Stenotrophomonas maltophilia (strain K279a), this protein is Major fimbrial subunit SMF-1.